The following is a 306-amino-acid chain: Ribosomal protein L11 methyltransferase (306 aa).

Positions 139, 173, 195, and 242 each coordinate S-adenosyl-L-methionine.

It belongs to the methyltransferase superfamily. PrmA family.

It is found in the cytoplasm. It carries out the reaction L-lysyl-[protein] + 3 S-adenosyl-L-methionine = N(6),N(6),N(6)-trimethyl-L-lysyl-[protein] + 3 S-adenosyl-L-homocysteine + 3 H(+). Functionally, methylates ribosomal protein L11. The sequence is that of Ribosomal protein L11 methyltransferase from Trichormus variabilis (strain ATCC 29413 / PCC 7937) (Anabaena variabilis).